The chain runs to 71 residues: Exodeoxyribonuclease 7 small subunit (71 aa).

The protein belongs to the XseB family. In terms of assembly, heterooligomer composed of large and small subunits.

Its subcellular location is the cytoplasm. It catalyses the reaction Exonucleolytic cleavage in either 5'- to 3'- or 3'- to 5'-direction to yield nucleoside 5'-phosphates.. In terms of biological role, bidirectionally degrades single-stranded DNA into large acid-insoluble oligonucleotides, which are then degraded further into small acid-soluble oligonucleotides. The polypeptide is Exodeoxyribonuclease 7 small subunit (Streptococcus uberis (strain ATCC BAA-854 / 0140J)).